Here is a 214-residue protein sequence, read N- to C-terminus: 3-isopropylmalate dehydratase small subunit (214 aa).

It belongs to the LeuD family. LeuD type 1 subfamily. In terms of assembly, heterodimer of LeuC and LeuD.

The enzyme catalyses (2R,3S)-3-isopropylmalate = (2S)-2-isopropylmalate. It functions in the pathway amino-acid biosynthesis; L-leucine biosynthesis; L-leucine from 3-methyl-2-oxobutanoate: step 2/4. Catalyzes the isomerization between 2-isopropylmalate and 3-isopropylmalate, via the formation of 2-isopropylmaleate. The chain is 3-isopropylmalate dehydratase small subunit from Pseudomonas putida (strain ATCC 47054 / DSM 6125 / CFBP 8728 / NCIMB 11950 / KT2440).